Consider the following 227-residue polypeptide: Uracil-DNA glycosylase (227 aa).

The Proton acceptor role is filled by D68.

It belongs to the uracil-DNA glycosylase (UDG) superfamily. UNG family.

Its subcellular location is the cytoplasm. The catalysed reaction is Hydrolyzes single-stranded DNA or mismatched double-stranded DNA and polynucleotides, releasing free uracil.. Excises uracil residues from the DNA which can arise as a result of misincorporation of dUMP residues by DNA polymerase or due to deamination of cytosine. The protein is Uracil-DNA glycosylase of Mycolicibacterium smegmatis (strain ATCC 700084 / mc(2)155) (Mycobacterium smegmatis).